The primary structure comprises 109 residues: Aquaporin-2 (109 aa).

The Cytoplasmic portion of the chain corresponds to 1–6 (SIAFSR). The helical transmembrane segment at 7–27 (AVFSEFLATLLFVFFGLGSAL) threads the bilayer. Over 28–35 (NWPQALPS) the chain is Extracellular. Residues 36–54 (VLQIAMAFGLAIGTLVQAL) form a helical membrane-spanning segment. The Cytoplasmic segment spans residues 55–59 (GHISG). The discontinuously helical intramembrane region spans 60–69 (AHINPAVTVA). The NPA 1 signature appears at 63–65 (NPA). Residues 70–80 (CLVGCHVSFLR) lie on the Cytoplasmic side of the membrane. A helical membrane pass occupies residues 81–102 (ATFYLAAQLLGAVAGAAILHEI). Topologically, residues 103-109 (TPPDIRG) are extracellular.

This sequence belongs to the MIP/aquaporin (TC 1.A.8) family. In terms of assembly, homotetramer. Post-translationally, serine phosphorylation is necessary and sufficient for expression at the apical membrane. Endocytosis is not phosphorylation-dependent. In terms of processing, N-glycosylated.

It is found in the apical cell membrane. It localises to the basolateral cell membrane. The protein localises to the cell membrane. The protein resides in the cytoplasmic vesicle membrane. Its subcellular location is the golgi apparatus. It is found in the trans-Golgi network membrane. The catalysed reaction is H2O(in) = H2O(out). It carries out the reaction glycerol(in) = glycerol(out). Forms a water-specific channel that provides the plasma membranes of renal collecting duct with high permeability to water, thereby permitting water to move in the direction of an osmotic gradient. Plays an essential role in renal water homeostasis. Could also be permeable to glycerol. This is Aquaporin-2 from Dugong dugon (Dugong).